The following is a 273-amino-acid chain: Dermonecrotic toxin LsaSicTox-alphaIB1avi (273 aa).

The active site involves histidine 5. Residues glutamate 25 and aspartate 27 each coordinate Mg(2+). The active-site Nucleophile is histidine 41. Cystine bridges form between cysteine 45-cysteine 51 and cysteine 47-cysteine 190. Aspartate 85 serves as a coordination point for Mg(2+).

Belongs to the arthropod phospholipase D family. Class II subfamily. It depends on Mg(2+) as a cofactor. As to expression, expressed by the venom gland.

Its subcellular location is the secreted. It catalyses the reaction an N-(acyl)-sphingosylphosphocholine = an N-(acyl)-sphingosyl-1,3-cyclic phosphate + choline. The catalysed reaction is an N-(acyl)-sphingosylphosphoethanolamine = an N-(acyl)-sphingosyl-1,3-cyclic phosphate + ethanolamine. The enzyme catalyses a 1-acyl-sn-glycero-3-phosphocholine = a 1-acyl-sn-glycero-2,3-cyclic phosphate + choline. It carries out the reaction a 1-acyl-sn-glycero-3-phosphoethanolamine = a 1-acyl-sn-glycero-2,3-cyclic phosphate + ethanolamine. Dermonecrotic toxins cleave the phosphodiester linkage between the phosphate and headgroup of certain phospholipids (sphingolipid and lysolipid substrates), forming an alcohol (often choline) and a cyclic phosphate. This toxin acts on sphingomyelin (SM). It may also act on ceramide phosphoethanolamine (CPE), lysophosphatidylcholine (LPC) and lysophosphatidylethanolamine (LPE), but not on lysophosphatidylserine (LPS), and lysophosphatidylglycerol (LPG). It acts by transphosphatidylation, releasing exclusively cyclic phosphate products as second products. Induces dermonecrosis, hemolysis, increased vascular permeability, edema, inflammatory response, and platelet aggregation. The chain is Dermonecrotic toxin LsaSicTox-alphaIB1avi from Loxosceles sabina (Tucson recluse spider).